A 244-amino-acid chain; its full sequence is Methylthioribulose-1-phosphate dehydratase (244 aa).

A substrate-binding site is contributed by cysteine 89. Histidine 107 and histidine 109 together coordinate Zn(2+). The Proton donor/acceptor role is filled by glutamate 130. Residue histidine 192 coordinates Zn(2+).

The protein belongs to the aldolase class II family. MtnB subfamily. The cofactor is Zn(2+).

It is found in the cytoplasm. It catalyses the reaction 5-(methylsulfanyl)-D-ribulose 1-phosphate = 5-methylsulfanyl-2,3-dioxopentyl phosphate + H2O. The protein operates within amino-acid biosynthesis; L-methionine biosynthesis via salvage pathway; L-methionine from S-methyl-5-thio-alpha-D-ribose 1-phosphate: step 2/6. Catalyzes the dehydration of methylthioribulose-1-phosphate (MTRu-1-P) into 2,3-diketo-5-methylthiopentyl-1-phosphate (DK-MTP-1-P). This Saccharomyces cerevisiae (strain YJM789) (Baker's yeast) protein is Methylthioribulose-1-phosphate dehydratase.